Here is a 185-residue protein sequence, read N- to C-terminus: Peptidyl-tRNA hydrolase (185 aa).

TRNA is bound at residue tyrosine 14. Histidine 19 serves as the catalytic Proton acceptor. TRNA-binding residues include tyrosine 64, asparagine 66, and asparagine 112.

Belongs to the PTH family. In terms of assembly, monomer.

The protein resides in the cytoplasm. It carries out the reaction an N-acyl-L-alpha-aminoacyl-tRNA + H2O = an N-acyl-L-amino acid + a tRNA + H(+). In terms of biological role, hydrolyzes ribosome-free peptidyl-tRNAs (with 1 or more amino acids incorporated), which drop off the ribosome during protein synthesis, or as a result of ribosome stalling. Its function is as follows. Catalyzes the release of premature peptidyl moieties from peptidyl-tRNA molecules trapped in stalled 50S ribosomal subunits, and thus maintains levels of free tRNAs and 50S ribosomes. This is Peptidyl-tRNA hydrolase from Pediococcus pentosaceus (strain ATCC 25745 / CCUG 21536 / LMG 10740 / 183-1w).